A 124-amino-acid polypeptide reads, in one-letter code: Small ribosomal subunit protein uS12 (124 aa).

D89 carries the 3-methylthioaspartic acid modification. The tract at residues 102–124 (LDTSGVNNRKHGRSKYGTKRPKS) is disordered. The span at 109 to 124 (NRKHGRSKYGTKRPKS) shows a compositional bias: basic residues.

This sequence belongs to the universal ribosomal protein uS12 family. As to quaternary structure, part of the 30S ribosomal subunit. Contacts proteins S8 and S17. May interact with IF1 in the 30S initiation complex.

In terms of biological role, with S4 and S5 plays an important role in translational accuracy. Functionally, interacts with and stabilizes bases of the 16S rRNA that are involved in tRNA selection in the A site and with the mRNA backbone. Located at the interface of the 30S and 50S subunits, it traverses the body of the 30S subunit contacting proteins on the other side and probably holding the rRNA structure together. The combined cluster of proteins S8, S12 and S17 appears to hold together the shoulder and platform of the 30S subunit. The sequence is that of Small ribosomal subunit protein uS12 from Francisella tularensis subsp. novicida (strain U112).